An 804-amino-acid chain; its full sequence is Phenylalanine--tRNA ligase beta subunit (804 aa).

Residues 39–147 (GPSFSNVVVA…PNLPLGEDLA (109 aa)) enclose the tRNA-binding domain. The B5 domain maps to 402–480 (ETVGEIHLRC…RIHGYDNIPV (79 aa)). Mg(2+) contacts are provided by D458, D464, E467, and E468. The FDX-ACB domain maps to 711–804 (SRYPESSRDV…IIDQTGARVR (94 aa)).

The protein belongs to the phenylalanyl-tRNA synthetase beta subunit family. Type 1 subfamily. Tetramer of two alpha and two beta subunits. Mg(2+) serves as cofactor.

The protein resides in the cytoplasm. It catalyses the reaction tRNA(Phe) + L-phenylalanine + ATP = L-phenylalanyl-tRNA(Phe) + AMP + diphosphate + H(+). The protein is Phenylalanine--tRNA ligase beta subunit of Syntrophus aciditrophicus (strain SB).